The primary structure comprises 210 residues: Rho-related GTP-binding protein RhoD (210 aa).

Residue 24-31 coordinates GTP; sequence GDGGCGKT. An Effector region motif is present at residues 46-54; sequence YTPTVFERY. GTP contacts are provided by residues 71 to 75 and 129 to 132; these read DTAGQ and CKTD. Cysteine 207 carries the post-translational modification Cysteine methyl ester. Cysteine 207 carries S-geranylgeranyl cysteine lipidation. The propeptide at 208–210 is removed in mature form; that stretch reads VVT.

Belongs to the small GTPase superfamily. Rho family. In terms of assembly, interacts (in GTP-bound form) with DIAPH2 isoform 3, DAPK3, FILIP1 and WHAMM. Interacts with PAK5. Interacts (independent of GTP-loaded status) with ANKFY1. In terms of tissue distribution, heart, placenta, liver, skeletal muscle, and pancreas and, with weaker intensity, in several other tissues.

Its subcellular location is the cell membrane. The protein localises to the early endosome. In terms of biological role, involved in endosome dynamics. May coordinate membrane transport with the function of the cytoskeleton. Involved in the internalization and trafficking of activated tyrosine kinase receptors such as PDGFRB. Participates in the reorganization of actin cytoskeleton; the function seems to involve WHAMM and includes regulation of filopodia formation and actin filament bundling. Can modulate the effect of DAPK3 in reorganization of actin cytoskeleton and focal adhesion dissolution. This Homo sapiens (Human) protein is Rho-related GTP-binding protein RhoD.